Consider the following 81-residue polypeptide: Putative defensin-like protein 52 (81 aa).

The signal sequence occupies residues 1-20 (MTFFLVIILAISSSNYNVLA). Disulfide bonds link C31–C55 and C41–C64.

This sequence belongs to the DEFL family.

It is found in the secreted. The polypeptide is Putative defensin-like protein 52 (Arabidopsis thaliana (Mouse-ear cress)).